The chain runs to 467 residues: Probable glycerol-3-phosphate dehydrogenase [NAD(+)] 2, cytosolic (467 aa).

Residues 47 to 52 (GAGAWG), lysine 195, and alanine 234 each bind NAD(+). Lysine 195 is a binding site for substrate. Residue lysine 284 is the Proton acceptor of the active site. Residues arginine 346 and glutamine 374 each contribute to the NAD(+) site. Residue 346–347 (RN) coordinates substrate.

The protein belongs to the NAD-dependent glycerol-3-phosphate dehydrogenase family.

The protein resides in the cytoplasm. The protein localises to the cytosol. It catalyses the reaction sn-glycerol 3-phosphate + NAD(+) = dihydroxyacetone phosphate + NADH + H(+). Functionally, may be involved in cell redox homeostasis. The chain is Probable glycerol-3-phosphate dehydrogenase [NAD(+)] 2, cytosolic from Oryza sativa subsp. japonica (Rice).